Consider the following 486-residue polypeptide: Cobyric acid synthase (486 aa).

The GATase cobBQ-type domain maps to 250-438 (AFRIVVPVPP…LHGMFDTPSA (189 aa)). Residue C331 is the Nucleophile of the active site. Residue H430 is part of the active site.

This sequence belongs to the CobB/CobQ family. CobQ subfamily.

The protein operates within cofactor biosynthesis; adenosylcobalamin biosynthesis. Its function is as follows. Catalyzes amidations at positions B, D, E, and G on adenosylcobyrinic A,C-diamide. NH(2) groups are provided by glutamine, and one molecule of ATP is hydrogenolyzed for each amidation. The chain is Cobyric acid synthase from Herminiimonas arsenicoxydans.